A 137-amino-acid polypeptide reads, in one-letter code: Large ribosomal subunit protein uL13 (137 aa).

Arginine 55 is subject to Citrulline. The residue at position 73 (serine 73) is a Phosphoserine. Arginine 136 is subject to Citrulline.

The protein belongs to the universal ribosomal protein uL13 family. As to quaternary structure, component of the 60S ribosome. Component of the GAIT complex. Interacts with EIF4G1. In terms of processing, phosphorylation at Ser-73 upon interferon-gamma treatment in macrophages involves a DAPK1-DAPK3 kinase cascade and is causing release from the ribosome, association with the GAIT complex and subsequent involvement in transcript-selective translation inhibition. Citrullinated by PADI4.

It localises to the cytoplasm. In terms of biological role, associated with ribosomes but is not required for canonical ribosome function and has extra-ribosomal functions. Component of the GAIT (gamma interferon-activated inhibitor of translation) complex which mediates interferon-gamma-induced transcript-selective translation inhibition in inflammation processes. Upon interferon-gamma activation and subsequent phosphorylation dissociates from the ribosome and assembles into the GAIT complex which binds to stem loop-containing GAIT elements in the 3'-UTR of diverse inflammatory mRNAs (such as ceruplasmin) and suppresses their translation. In the GAIT complex interacts with m7G cap-bound eIF4G at or near the eIF3-binding site and blocks the recruitment of the 43S ribosomal complex. Involved in methylation of rRNA. This Sus scrofa (Pig) protein is Large ribosomal subunit protein uL13 (RPL13A).